A 374-amino-acid polypeptide reads, in one-letter code: DNA integrity scanning protein DisA (374 aa).

One can recognise a DAC domain in the interval 20–158 (DGLMRASLSA…DGQRRVLEDS (139 aa)). Residues G87, L105, and 118–122 (TRHRT) each bind ATP.

Belongs to the DisA family. As to quaternary structure, homooctamer. Interacts with RadA. Mg(2+) serves as cofactor.

It catalyses the reaction 2 ATP = 3',3'-c-di-AMP + 2 diphosphate. With respect to regulation, diadenylate cyclase activity is inhibited by the interaction with RadA. Its function is as follows. Participates in a DNA-damage check-point that is active prior to asymmetric division when DNA is damaged. DisA forms globular foci that rapidly scan along the chromosomes during sporulation, searching for lesions. When a lesion is present, DisA pauses at the lesion site. This triggers a cellular response that culminates in a temporary block in sporulation initiation. Also has diadenylate cyclase activity, catalyzing the condensation of 2 ATP molecules into cyclic di-AMP (c-di-AMP). c-di-AMP acts as a signaling molecule that couples DNA integrity with progression of sporulation. The rise in c-di-AMP level generated by DisA while scanning the chromosome, operates as a positive signal that advances sporulation; upon encountering a lesion, the DisA focus arrests at the damaged site and halts c-di-AMP synthesis. In Streptomyces coelicolor (strain ATCC BAA-471 / A3(2) / M145), this protein is DNA integrity scanning protein DisA.